We begin with the raw amino-acid sequence, 442 residues long: NADH-quinone oxidoreductase subunit D (442 aa).

Belongs to the complex I 49 kDa subunit family. NDH-1 is composed of 14 different subunits. Subunits NuoB, C, D, E, F, and G constitute the peripheral sector of the complex.

Its subcellular location is the cell membrane. It catalyses the reaction a quinone + NADH + 5 H(+)(in) = a quinol + NAD(+) + 4 H(+)(out). Its function is as follows. NDH-1 shuttles electrons from NADH, via FMN and iron-sulfur (Fe-S) centers, to quinones in the respiratory chain. The immediate electron acceptor for the enzyme in this species is believed to be a menaquinone. Couples the redox reaction to proton translocation (for every two electrons transferred, four hydrogen ions are translocated across the cytoplasmic membrane), and thus conserves the redox energy in a proton gradient. The protein is NADH-quinone oxidoreductase subunit D of Mycolicibacterium vanbaalenii (strain DSM 7251 / JCM 13017 / BCRC 16820 / KCTC 9966 / NRRL B-24157 / PYR-1) (Mycobacterium vanbaalenii).